Reading from the N-terminus, the 544-residue chain is MSEENLRPAYDDQVNEDVYKRGAQSKLTKARKADFDDEKDKKKDNDKHIDKRPKSGPRLDENGNPLPKEPRLPKRKVAVMVGYCGTGYHGMQYNPPNPTIESALFKAFVEAGAISKDNSNDLKKNGFMRAARTDKGVHAGGNLISLKMIIEDPDIKQKINEKLPEGIRVWDIERVNKAFDCRKMCSSRWYEYLLPTYSLIGPKPGSILYRDIEESKTELPGVLDEDLESKEFWEEFKKDANEKFSTEEIEAILAYVPPARDEFDINEELYQKVKKYKQLENAHRRRYRISAAKLAKFRASTSQYLGAHNFHNFTLGKDFKEPSAIRFMKDIKVSDPFVIGDAQTEWISIKIHGQSFMLHQIRKMVSMATLITRCGCPVERISQAYGQQKINIPKAPALGLLLEAPVFEGYNKRLEQFGYKAIDFSKYQDEVDKFKMKHIYDKIYKEEVDENVFNAFFSYIDSFNKVTGAQGEETADKSGPAVQKSIFEFLTAKGIPGLTDAPESNKKIKQRKRMEEEEAASKKAEISSTTQSNEPEVQPEAAAN.

2 stretches are compositionally biased toward basic and acidic residues: residues 1–10 (MSEENLRPAY) and 31–61 (RKADFDDEKDKKKDNDKHIDKRPKSGPRLDE). The tract at residues 1-74 (MSEENLRPAY…PLPKEPRLPK (74 aa)) is disordered. Asp-134 functions as the Nucleophile in the catalytic mechanism. Residues 495-544 (IPGLTDAPESNKKIKQRKRMEEEEAASKKAEISSTTQSNEPEVQPEAAAN) form a disordered region. Positions 513 to 525 (RMEEEEAASKKAE) are enriched in basic and acidic residues.

Belongs to the tRNA pseudouridine synthase TruA family. Zn(2+) is required as a cofactor.

It localises to the nucleus. The enzyme catalyses a uridine in tRNA = a pseudouridine in tRNA. It catalyses the reaction uridine in snRNA = pseudouridine in snRNA. The catalysed reaction is a uridine in mRNA = a pseudouridine in mRNA. Formation of pseudouridine at positions 27 and 28 in the anticodon stem and loop of transfer RNAs; at positions 34 and 36 of intron-containing precursor tRNA(Ile) and at position 35 in the intron-containing tRNA(Tyr). Catalyzes pseudouridylation at position 44 in U2 snRNA. Also catalyzes pseudouridylation of mRNAs. This Saccharomyces cerevisiae (strain ATCC 204508 / S288c) (Baker's yeast) protein is tRNA pseudouridine synthase 1 (PUS1).